Consider the following 124-residue polypeptide: UPF0538 protein (124 aa).

The protein belongs to the UPF0538 family.

This is UPF0538 protein from Dictyostelium discoideum (Social amoeba).